A 608-amino-acid polypeptide reads, in one-letter code: V-type ATP synthase subunit I (608 aa).

The next 9 membrane-spanning stretches (helical) occupy residues Ile-308–Gly-325, Ala-327–Leu-346, Gly-356–Phe-376, Ile-405–Phe-425, Ile-438–Ile-458, Phe-464–Phe-484, Cys-495–Ala-515, Ile-517–Phe-537, and Ile-550–Leu-570.

This sequence belongs to the V-ATPase 116 kDa subunit family.

Its subcellular location is the cell membrane. Functionally, produces ATP from ADP in the presence of a proton gradient across the membrane. The polypeptide is V-type ATP synthase subunit I (atpI) (Borreliella burgdorferi (strain ATCC 35210 / DSM 4680 / CIP 102532 / B31) (Borrelia burgdorferi)).